The following is a 57-amino-acid chain: Large ribosomal subunit protein bL32 (57 aa).

The protein belongs to the bacterial ribosomal protein bL32 family.

This chain is Large ribosomal subunit protein bL32, found in Corynebacterium glutamicum (strain R).